The following is a 571-amino-acid chain: uncharacterized protein (571 aa).

5 helical membrane-spanning segments follow: residues 10 to 29, 36 to 55, 65 to 87, 96 to 118, and 166 to 188; these read VRLHPELALFAAIVFGHFIG, VSLGTVVGTLIAGMILGLLF, WAFFDLFLFAVGYSAGPQFFASL, ALAVVVSCTGLAAAIAMVALFRF, and ATTYIFGEVGLILFVTVVAPRLL. Positions 294 to 378 constitute an RCK C-terminal domain; that stretch reads TEVDDQELLS…IATAARNLGF (85 aa). A run of 6 helical transmembrane segments spans residues 388–406, 411–433, 446–465, 480–502, 509–531, and 546–568; these read LVYLAGGVVVGILFGLLQV, VPLGLGTSGGVLVVGLVAGWLYS, LRLLSDVGLIVFIAAIGLAA, LFAKLVGAGVVVTLAGPIAGLLL, LPPVALLPGIAGAQTTVATLNAL, and VPFAVSNVLITLWGPVIVACAVA.

This sequence belongs to the AAE transporter (TC 2.A.81) family.

It is found in the cell membrane. This is an uncharacterized protein from Bordetella parapertussis (strain 12822 / ATCC BAA-587 / NCTC 13253).